Reading from the N-terminus, the 160-residue chain is Transcription elongation factor GreA (160 aa).

Residues 3–84 adopt a coiled-coil conformation; it reads NIVDDKILLT…SKAKIIKADL (82 aa).

It belongs to the GreA/GreB family.

Necessary for efficient RNA polymerase transcription elongation past template-encoded arresting sites. The arresting sites in DNA have the property of trapping a certain fraction of elongating RNA polymerases that pass through, resulting in locked ternary complexes. Cleavage of the nascent transcript by cleavage factors such as GreA or GreB allows the resumption of elongation from the new 3'terminus. GreA releases sequences of 2 to 3 nucleotides. The sequence is that of Transcription elongation factor GreA from Mesomycoplasma hyopneumoniae (strain J / ATCC 25934 / NCTC 10110) (Mycoplasma hyopneumoniae).